A 380-amino-acid polypeptide reads, in one-letter code: uncharacterized protein (380 aa).

HTH tetR-type domains follow at residues 3–63 and 201–262; these read ESAE…KEGL and VRTR…CAEI. Positions 225–244 form a DNA-binding region, H-T-H motif; it reads TISDITRKSNIRRATFYDHY.

This is an uncharacterized protein from Bacillus subtilis (strain 168).